A 178-amino-acid polypeptide reads, in one-letter code: Large ribosomal subunit protein bL25 (178 aa).

It belongs to the bacterial ribosomal protein bL25 family. CTC subfamily. In terms of assembly, part of the 50S ribosomal subunit; part of the 5S rRNA/L5/L18/L25 subcomplex. Contacts the 5S rRNA. Binds to the 5S rRNA independently of L5 and L18.

This is one of the proteins that binds to the 5S RNA in the ribosome where it forms part of the central protuberance. In Helicobacter pylori (strain Shi470), this protein is Large ribosomal subunit protein bL25.